Consider the following 429-residue polypeptide: Ribosomal RNA small subunit methyltransferase B (429 aa).

S-adenosyl-L-methionine-binding positions include 254–260 (CAAPGGK), Asp277, Asp303, and Asp322. Cys375 acts as the Nucleophile in catalysis. The segment at 397–419 (ALSETGTPDQPGQQNLPGGEEGD) is disordered. The segment covering 400-412 (ETGTPDQPGQQNL) has biased composition (polar residues).

The protein belongs to the class I-like SAM-binding methyltransferase superfamily. RsmB/NOP family.

Its subcellular location is the cytoplasm. It catalyses the reaction cytidine(967) in 16S rRNA + S-adenosyl-L-methionine = 5-methylcytidine(967) in 16S rRNA + S-adenosyl-L-homocysteine + H(+). In terms of biological role, specifically methylates the cytosine at position 967 (m5C967) of 16S rRNA. The chain is Ribosomal RNA small subunit methyltransferase B from Salmonella enteritidis PT4 (strain P125109).